Here is a 118-residue protein sequence, read N- to C-terminus: Large ribosomal subunit protein uL22 (118 aa).

This sequence belongs to the universal ribosomal protein uL22 family. Part of the 50S ribosomal subunit.

This protein binds specifically to 23S rRNA; its binding is stimulated by other ribosomal proteins, e.g. L4, L17, and L20. It is important during the early stages of 50S assembly. It makes multiple contacts with different domains of the 23S rRNA in the assembled 50S subunit and ribosome. In terms of biological role, the globular domain of the protein is located near the polypeptide exit tunnel on the outside of the subunit, while an extended beta-hairpin is found that lines the wall of the exit tunnel in the center of the 70S ribosome. This Levilactobacillus brevis (strain ATCC 367 / BCRC 12310 / CIP 105137 / JCM 1170 / LMG 11437 / NCIMB 947 / NCTC 947) (Lactobacillus brevis) protein is Large ribosomal subunit protein uL22.